A 252-amino-acid polypeptide reads, in one-letter code: 4-hydroxy-tetrahydrodipicolinate reductase (252 aa).

NAD(+) is bound by residues 8–13 (GCSGKM), 85–87 (CTT), and 109–112 (SANM). The active-site Proton donor/acceptor is the H142. H143 is a binding site for (S)-2,3,4,5-tetrahydrodipicolinate. The active-site Proton donor is the K146. (S)-2,3,4,5-tetrahydrodipicolinate is bound at residue 152–153 (GT).

Belongs to the DapB family.

Its subcellular location is the cytoplasm. The catalysed reaction is (S)-2,3,4,5-tetrahydrodipicolinate + NAD(+) + H2O = (2S,4S)-4-hydroxy-2,3,4,5-tetrahydrodipicolinate + NADH + H(+). It carries out the reaction (S)-2,3,4,5-tetrahydrodipicolinate + NADP(+) + H2O = (2S,4S)-4-hydroxy-2,3,4,5-tetrahydrodipicolinate + NADPH + H(+). The protein operates within amino-acid biosynthesis; L-lysine biosynthesis via DAP pathway; (S)-tetrahydrodipicolinate from L-aspartate: step 4/4. In terms of biological role, catalyzes the conversion of 4-hydroxy-tetrahydrodipicolinate (HTPA) to tetrahydrodipicolinate. This chain is 4-hydroxy-tetrahydrodipicolinate reductase, found in Clostridium novyi (strain NT).